A 93-amino-acid chain; its full sequence is Acylphosphatase (93 aa).

In terms of domain architecture, Acylphosphatase-like spans 5–93 (CIIAWVHGRV…EELTGFRIRY (89 aa)). Residues R20 and N38 contribute to the active site.

The protein belongs to the acylphosphatase family.

It catalyses the reaction an acyl phosphate + H2O = a carboxylate + phosphate + H(+). This chain is Acylphosphatase (acyP), found in Citrobacter koseri (strain ATCC BAA-895 / CDC 4225-83 / SGSC4696).